A 107-amino-acid chain; its full sequence is uncharacterized protein (107 aa).

The protein resides in the mitochondrion. This is an uncharacterized protein from Arabidopsis thaliana (Mouse-ear cress).